Here is a 486-residue protein sequence, read N- to C-terminus: Cytosol aminopeptidase (486 aa).

Residues Lys-249 and Asp-254 each coordinate Zn(2+). Residue Lys-261 is part of the active site. Zn(2+)-binding residues include Asp-272, Asp-331, and Glu-333. Arg-335 is a catalytic residue.

This sequence belongs to the peptidase M17 family. Homohexamer. Zn(2+) serves as cofactor.

The protein resides in the cytoplasm. The catalysed reaction is Release of an N-terminal amino acid, Xaa-|-Yaa-, in which Xaa is preferably Leu, but may be other amino acids including Pro although not Arg or Lys, and Yaa may be Pro. Amino acid amides and methyl esters are also readily hydrolyzed, but rates on arylamides are exceedingly low.. It catalyses the reaction Release of N-terminal proline from a peptide.. Its function is as follows. Presumably involved in the processing and regular turnover of intracellular proteins. Catalyzes the removal of unsubstituted N-terminal amino acids from various peptides. This Encephalitozoon cuniculi (strain GB-M1) (Microsporidian parasite) protein is Cytosol aminopeptidase.